Here is a 155-residue protein sequence, read N- to C-terminus: SsrA-binding protein (155 aa).

This sequence belongs to the SmpB family.

The protein resides in the cytoplasm. Required for rescue of stalled ribosomes mediated by trans-translation. Binds to transfer-messenger RNA (tmRNA), required for stable association of tmRNA with ribosomes. tmRNA and SmpB together mimic tRNA shape, replacing the anticodon stem-loop with SmpB. tmRNA is encoded by the ssrA gene; the 2 termini fold to resemble tRNA(Ala) and it encodes a 'tag peptide', a short internal open reading frame. During trans-translation Ala-aminoacylated tmRNA acts like a tRNA, entering the A-site of stalled ribosomes, displacing the stalled mRNA. The ribosome then switches to translate the ORF on the tmRNA; the nascent peptide is terminated with the 'tag peptide' encoded by the tmRNA and targeted for degradation. The ribosome is freed to recommence translation, which seems to be the essential function of trans-translation. The protein is SsrA-binding protein of Chelativorans sp. (strain BNC1).